The chain runs to 1055 residues: Elongation factor 3 (1055 aa).

V45 provides a ligand contact to ADP. HEAT repeat units lie at residues V45–A86, S96–P133, A135–Y172, G175–N213, E217–I255, L257–S290, and R295–E337. 2 consecutive ABC transporter domains span residues C447–Q659 and L687–G1004. The ADP site is built by N723, E933, N936, and H962. Disordered regions lie at residues H987–D1006 and E1024–L1055. Over residues R1033 to K1044 the composition is skewed to basic residues.

This sequence belongs to the ABC transporter superfamily. ABCF family. EF3 subfamily. In terms of assembly, associates with ribosomes.

It is found in the cytoplasm. The protein resides in the cytosol. The enzyme catalyses ATP + H2O = ADP + phosphate + H(+). The protein operates within protein biosynthesis; polypeptide chain elongation. Functionally, ribosome-dependent ATPase that functions in cytoplasmic translation elongation. Required for the ATP-dependent release of deacylated tRNA from the ribosomal E-site during protein biosynthesis. Stimulates the eEF1A-dependent binding of aminoacyl-tRNA to the ribosomal A-site, which has reduced affinity for tRNA as long as the E-site is occupied. Assists translation termination by stimulating the release of nascent protein from the ribosome by release factors. Appears to target calcium-channel protein CCH1 to the plasma membrane. This Cryptococcus neoformans var. neoformans serotype D (strain JEC21 / ATCC MYA-565) (Filobasidiella neoformans) protein is Elongation factor 3.